A 491-amino-acid polypeptide reads, in one-letter code: Protein OrfX3 (491 aa).

The protein belongs to the TULIP P47 family. In terms of assembly, heterodimer of OrfX1 and OrfX3; crystallizes as a dimer of heterodimers.

Its function is as follows. Expression of the ptox operon (ntnh-orfX1-orfX2-orfX3-pmp1) in B.thuringiensis kills Anopheles but not Aedes mosquito 3rd instar larvae. The ntnh-pmp1 construct is about half as toxic. In Paraclostridium bifermentans (Clostridium bifermentans), this protein is Protein OrfX3.